The chain runs to 423 residues: CinA-like protein (423 aa).

This sequence belongs to the CinA family.

The chain is CinA-like protein from Prochlorococcus marinus (strain SARG / CCMP1375 / SS120).